The sequence spans 342 residues: Phosphate acyltransferase (342 aa).

This sequence belongs to the PlsX family. As to quaternary structure, homodimer. Probably interacts with PlsY.

The protein localises to the cytoplasm. The enzyme catalyses a fatty acyl-[ACP] + phosphate = an acyl phosphate + holo-[ACP]. Its pathway is lipid metabolism; phospholipid metabolism. Functionally, catalyzes the reversible formation of acyl-phosphate (acyl-PO(4)) from acyl-[acyl-carrier-protein] (acyl-ACP). This enzyme utilizes acyl-ACP as fatty acyl donor, but not acyl-CoA. This Shewanella sp. (strain MR-4) protein is Phosphate acyltransferase.